Reading from the N-terminus, the 717-residue chain is Scinderin (717 aa).

Residues 1 to 363 form an actin-severing region; that stretch reads MAPERHPPAF…DGFGKVYVTE (363 aa). The Gelsolin-like 1 repeat unit spans residues 28-108; the sequence is ELVPVPPSRH…IQGYESNEFV (81 aa). A 1,2-diacyl-sn-glycero-3-phospho-(1D-myo-inositol-4,5-bisphosphate) is bound by residues 112-119 and 138-146; these read KGGIKYKA and RLLHIKGRR. 5 Gelsolin-like repeats span residues 148 to 220, 265 to 340, 408 to 483, 526 to 590, and 628 to 703; these read VRAT…PDEL, VVAE…TPIF, RVPV…PHLL, AEVD…EEFW, and IEEV…PPTF. The tract at residues 364 to 715 is ca(2+)-dependent actin binding; it reads RVAKIEQIEF…WFLAWDSNKW (352 aa). Ca(2+) is bound by residues asparagine 538, aspartate 539, glutamate 562, aspartate 643, aspartate 644, and glutamate 666.

Belongs to the villin/gelsolin family.

It is found in the cytoplasm. The protein localises to the cytoskeleton. The protein resides in the cell projection. Its subcellular location is the podosome. In terms of biological role, ca(2+)-dependent actin filament-severing protein that has a regulatory function in exocytosis by affecting the organization of the microfilament network underneath the plasma membrane. In vitro, also has barbed end capping and nucleating activities in the presence of Ca(2+). Severing activity is inhibited by phosphatidylinositol 4,5-bis-phosphate (PIP2). Required for megakaryocyte differentiation, maturation, polyploidization and apoptosis with the release of platelet-like particles. Plays a role in osteoclastogenesis (OCG) and actin cytoskeletal organization in osteoclasts. Regulates chondrocyte proliferation and differentiation. Inhibits cell proliferation and tumorigenesis. Signaling is mediated by MAPK, p38 and JNK pathways. This Gallus gallus (Chicken) protein is Scinderin (SCIN).